We begin with the raw amino-acid sequence, 483 residues long: Septin-8 (483 aa).

The span at M1 to P16 shows a compositional bias: basic and acidic residues. The disordered stretch occupies residues M1–G22. A2 carries the N-acetylalanine modification. At S10 the chain carries Phosphoserine. The Septin-type G domain maps to Q41–E307. Positions G51 to S58 are G1 motif. Residues G51–S58, G106, K187–E195, G241, and R256 contribute to the GTP site. The tract at residues D103–G106 is G3 motif. Residues A186 to D189 are G4 motif. A coiled-coil region spans residues F320–L413. The span at Q411–P420 shows a compositional bias: polar residues. Residues Q411–S443 are disordered. Basic and acidic residues predominate over residues L421–I433.

This sequence belongs to the TRAFAC class TrmE-Era-EngA-EngB-Septin-like GTPase superfamily. Septin GTPase family. In terms of assembly, septins polymerize into heterooligomeric protein complexes that form filaments, and can associate with cellular membranes, actin filaments and microtubules. GTPase activity is required for filament formation. Interacts with CDK14. Interacts with SEPTIN5. Interacts with SEPTIN7. Interacts with SEPTIN4. Interacts with VAMP2; the interaction inhibits interaction of VAMP2 with SYP. Interacts with STX1A. As to expression, widely expressed, including in brain, heart and platelets; most abundant in aorta. Isoform 2 is expressed at low levels in specific brain areas, such as occipital pole, frontal lobe, temporal lobe and putamen. Isoform 1 and 3 are highly expressed in specific brain areas, such as occipital pole, frontal lobe, temporal lobe and putamen. Isoform 2 is highly expressed in prostate, testis and ovary. Isoform 1 and isoform 3 are expressed at low levels in prostate, testis and ovary.

The protein resides in the cytoplasm. Its subcellular location is the cytoskeleton. It is found in the synapse. It localises to the cell projection. The protein localises to the axon. The protein resides in the cytoplasmic vesicle. Its subcellular location is the secretory vesicle. It is found in the synaptic vesicle membrane. It localises to the presynapse. Filament-forming cytoskeletal GTPase. May play a role in platelet secretion. Seems to participate in the process of SNARE complex formation in synaptic vesicles. Its function is as follows. Stabilizes BACE1 protein levels and promotes the sorting and accumulation of BACE1 to the recycling or endosomal compartments, modulating the beta-amyloidogenic processing of APP. The polypeptide is Septin-8 (Homo sapiens (Human)).